The sequence spans 201 residues: Small ribosomal subunit protein uS4c (201 aa).

The disordered stretch occupies residues L15–Q43. Residues M89–Q149 form the S4 RNA-binding domain.

As to quaternary structure, component of the chloroplast small ribosomal subunit (SSU). Mature 70S chloroplast ribosomes of higher plants consist of a small (30S) and a large (50S) subunit. The 30S small subunit contains 1 molecule of ribosomal RNA (16S rRNA) and 24 different proteins. The 50S large subunit contains 3 rRNA molecules (23S, 5S and 4.5S rRNA) and 33 different proteins.

The protein localises to the plastid. It localises to the chloroplast. In terms of biological role, component of the chloroplast ribosome (chloro-ribosome), a dedicated translation machinery responsible for the synthesis of chloroplast genome-encoded proteins, including proteins of the transcription and translation machinery and components of the photosynthetic apparatus. The chain is Small ribosomal subunit protein uS4c (rps4) from Spinacia oleracea (Spinach).